Here is a 491-residue protein sequence, read N- to C-terminus: Ketol-acid reductoisomerase (NADP(+)) (491 aa).

Residues 15 to 208 enclose the KARI N-terminal Rossmann domain; the sequence is AQLGKCRFMG…GGHRAGVLES (194 aa). NADP(+) is bound by residues 45–48, Arg68, Arg76, Ser78, and 108–110; these read CGAQ and DKQ. Residue His132 is part of the active site. An NADP(+)-binding site is contributed by Gly158. KARI C-terminal knotted domains are found at residues 209–344 and 345–484; these read SFVA…TAPQ and YEGK…MTDM. Residues Asp217, Glu221, Glu389, and Glu393 each coordinate Mg(2+). A substrate-binding site is contributed by Ser414.

This sequence belongs to the ketol-acid reductoisomerase family. Mg(2+) is required as a cofactor.

The enzyme catalyses (2R)-2,3-dihydroxy-3-methylbutanoate + NADP(+) = (2S)-2-acetolactate + NADPH + H(+). The catalysed reaction is (2R,3R)-2,3-dihydroxy-3-methylpentanoate + NADP(+) = (S)-2-ethyl-2-hydroxy-3-oxobutanoate + NADPH + H(+). It functions in the pathway amino-acid biosynthesis; L-isoleucine biosynthesis; L-isoleucine from 2-oxobutanoate: step 2/4. Its pathway is amino-acid biosynthesis; L-valine biosynthesis; L-valine from pyruvate: step 2/4. In terms of biological role, involved in the biosynthesis of branched-chain amino acids (BCAA). Catalyzes an alkyl-migration followed by a ketol-acid reduction of (S)-2-acetolactate (S2AL) to yield (R)-2,3-dihydroxy-isovalerate. In the isomerase reaction, S2AL is rearranged via a Mg-dependent methyl migration to produce 3-hydroxy-3-methyl-2-ketobutyrate (HMKB). In the reductase reaction, this 2-ketoacid undergoes a metal-dependent reduction by NADPH to yield (R)-2,3-dihydroxy-isovalerate. This is Ketol-acid reductoisomerase (NADP(+)) from Shigella flexneri.